Reading from the N-terminus, the 119-residue chain is Protein TusC (119 aa).

This sequence belongs to the DsrF/TusC family. Heterohexamer, formed by a dimer of trimers. The hexameric TusBCD complex contains 2 copies each of TusB, TusC and TusD. The TusBCD complex interacts with TusE.

Its subcellular location is the cytoplasm. Its function is as follows. Part of a sulfur-relay system required for 2-thiolation of 5-methylaminomethyl-2-thiouridine (mnm(5)s(2)U) at tRNA wobble positions. The protein is Protein TusC of Escherichia fergusonii (strain ATCC 35469 / DSM 13698 / CCUG 18766 / IAM 14443 / JCM 21226 / LMG 7866 / NBRC 102419 / NCTC 12128 / CDC 0568-73).